A 397-amino-acid chain; its full sequence is Bifunctional arginine demethylase and lysyl-hydroxylase psr-1 (397 aa).

The JmjC domain maps to Arg146–Arg310. Thr189 lines the substrate pocket. His192 and Asp194 together coordinate Fe cation. Asn202 contributes to the 2-oxoglutarate binding site. Lys209 is a substrate binding site. His278 serves as a coordination point for Fe cation. A 2-oxoglutarate-binding site is contributed by Thr290. The span at Ser334–Asn344 shows a compositional bias: polar residues. A disordered region spans residues Ser334–Val383. Residues Asp345 to Asp358 show a composition bias toward low complexity.

It belongs to the JMJD6 family. Interacts with ced-5 and ced-12. Requires Fe(2+) as cofactor.

It localises to the nucleus. Dioxygenase that can both act as a histone arginine demethylase and a lysyl-hydroxylase. The polypeptide is Bifunctional arginine demethylase and lysyl-hydroxylase psr-1 (psr-1) (Caenorhabditis briggsae).